The chain runs to 423 residues: Hydroxymethylglutaryl-CoA synthase-like protein AKT4-1 (423 aa).

This sequence belongs to the thiolase-like superfamily. HMG-CoA synthase family.

It participates in mycotoxin biosynthesis. Functionally, hydroxymethylglutaryl-CoA synthase-like protein; part of the gene clusters that mediate the biosynthesis of the host-selective toxins (HSTs) AK-toxins responsible for Japanese pear black spot disease by the Japanese pear pathotype. AK-toxins are esters of 9,10-epoxy 8-hydroxy 9-methyldecatrienoic acid (EDA). On cellular level, AK-toxins affect plasma membrane of susceptible cells and cause a sudden increase in loss of K(+) after a few minutes of toxin treatment. The acyl-CoA ligase AKT1, the hydrolase AKT2 and enoyl-CoA hydratase AKT3 are all involved in the biosynthesis of the AK-, AF- and ACT-toxin common 9,10-epoxy-8-hydroxy-9-methyl-decatrienoic acid (EDA) structural moiety. Part of the EDA biosynthesis occurs in the peroxisome since these 3 enzymes are localized in peroxisomes. The exact roles of the 3 enzymes, as well as of additional AK-toxin clusters enzymes, including AKT4, AKT6 and AKTS1, have still to be elucidated. The Cytochrome P450 monooxygenase AKT7 on the other side functions to limit production of EDA and AK-toxin, probably via the catalysis of a side reaction of EDA or its precursor. The chain is Hydroxymethylglutaryl-CoA synthase-like protein AKT4-1 from Alternaria alternata (Alternaria rot fungus).